The chain runs to 1341 residues: Pleckstrin homology domain-containing family G member 3 (1341 aa).

Residues 1 to 68 (MPVSTALHQD…PNSNNNSSGW (68 aa)) form a disordered region. Over residues 18–29 (SLVSTTSSSGSS) the composition is skewed to low complexity. 2 stretches are compositionally biased toward polar residues: residues 42-51 (SEASAQNGTG) and 59-68 (PNSNNNSSGW). Serine 76 is modified (phosphoserine). One can recognise a DH domain in the interval 93-272 (YLGRVVREIV…TCVAWYINDM (180 aa)). A PH domain is found at 296–394 (DLTTYGELVL…WTHHIKRLIL (99 aa)). Serine 433 and serine 502 each carry phosphoserine. Residues 433 to 482 (SQDEVSSHVRQGRRQSEPGHTLFSRATLPSRQQGFEMPGLKGRRKSEPTR) are disordered. Disordered stretches follow at residues 508-657 (DFGQ…EFPE) and 684-715 (PEGS…LLPP). 2 stretches are compositionally biased toward acidic residues: residues 529–541 (ELEE…EEEE) and 570–580 (GSEEEEEEEES). 7 positions are modified to phosphoserine: serine 571, serine 694, serine 695, serine 737, serine 759, serine 762, and serine 766. Positions 695 to 707 (SEEEEEEEMEAAQ) are enriched in acidic residues. The interval 775 to 832 (SIGDSLSNPPTPEVIIGADMVTDNGPSVNGTESPSAGSGCPTEQDRSSCKKKESALST) is disordered. Residues 798-810 (NGPSVNGTESPSA) show a composition bias toward polar residues. Residues 817 to 832 (EQDRSSCKKKESALST) are compositionally biased toward basic and acidic residues. Residues serine 862, serine 899, serine 900, and serine 947 each carry the phosphoserine modification. Disordered stretches follow at residues 876–930 (SRFN…EFCP), 939–958 (ERME…SQAN), 1071–1097 (KVTP…SGGK), and 1117–1162 (HGTS…PFDT). A compositionally biased stretch (basic and acidic residues) spans 939–948 (ERMESSERSP). The segment covering 949 to 958 (RTGSGQSQAN) has biased composition (polar residues). A phosphoserine mark is found at serine 1129, serine 1134, serine 1136, serine 1141, serine 1155, serine 1158, and serine 1201. A compositionally biased stretch (polar residues) spans 1135–1162 (FSPSAVSPRTTSPGARSSARSPLSPFDT). 2 disordered regions span residues 1204 to 1249 (ENIV…LNGG) and 1271 to 1341 (KGPH…NSVG). Residues 1309–1320 (QPKEHGPRDSAD) are compositionally biased toward basic and acidic residues.

Its subcellular location is the cytoplasm. It is found in the cytoskeleton. Its function is as follows. Plays a role in controlling cell polarity and cell motility by selectively binding newly polymerized actin and activating RAC1 and CDC42 to enhance local actin polymerization. The polypeptide is Pleckstrin homology domain-containing family G member 3 (Mus musculus (Mouse)).